The chain runs to 558 residues: Protein shisa-7 (558 aa).

Residues 1 to 22 (MPALLLLGTVALLASAAGPAGA) form the signal peptide. The Extracellular segment spans residues 23–189 (RPSNDTSSVA…GGEGPGGSTA (167 aa)). N26 is a glycosylation site (N-linked (GlcNAc...) asparagine). 2 disordered regions span residues 53 to 79 (GGSA…ARAP) and 142 to 181 (TPPP…GRGG). Positions 57–77 (AGTSANATKTSPASGTGAAAR) are enriched in low complexity. Over residues 148 to 181 (GGAGGAGGAGGGPGPGQAGWLEGGRAGGAGGRGG) the composition is skewed to gly residues. The GRID stretch occupies residues 154–175 (GGAGGGPGPGQAGWLEGGRAGG). Residues 190–210 (YVVCGVISFALAVGVGAKVAF) traverse the membrane as a helical segment. The Cytoplasmic segment spans residues 211-558 (SKASRAPRAH…RTASKNEVTV (348 aa)). The tract at residues 236-263 (QAGPATRPDRARSSSLTPGLGGPDSMAP) is disordered. S438 carries the post-translational modification Phosphoserine. The interval 443-506 (RQSREHLLSP…HHHHALHGSP (64 aa)) is disordered. Positions 453-462 (PRSPALPPDP) are enriched in pro residues. Low complexity predominate over residues 466 to 477 (ASLAASHSNLLL). Phosphothreonine is present on T532. The PDZ-binding signature appears at 555–558 (EVTV).

It belongs to the shisa family. In terms of assembly, interacts with GABA(A)R (GABA type A receptor) subunits GABRA1, GABRA2 and GABRG2; the interaction is direct. Does not interact with GABRB2 and GABRB3 subunits. Interacts with AMPAR subunits GRIA1, GRIA2 and GRIA3 and AMPAR auxiliary proteins SHISA6 and SHISA7 in heterologous cells. Interacts (via PDZ-binding motif) with DLG4/PSD-95 (via PDZ domain)in heterologous cells; the interaction is direct. In terms of processing, N-glycosylated. Mainly expressed in neurons. Highly expressed in brain structures including cortex, striatum, olfactory bulb, amygdala hippocampus CA1-3 and dentate gyrus (at protein level).

The protein localises to the postsynaptic density membrane. Functionally, transmembrane protein that regulates gamma-aminobutyric acid type A receptor (GABA(A)R) trafficking, channel deactivation kinetics and pharmacology, necessary for fast inhibitory transmission in the brain. Enhances the action of benzodiazepine, a primary GABA(A)Rs target drug, in the brain. May affect channel kinetics of AMPA-type glutamate receptors (AMPAR), the brain's main excitatory neurotransmitter, necessary for synaptic hippocampal plasticity, and memory recall. May regulate the induction and maintenance of long-term potentiation at Schaffer collaterals/CA3-CA1 excitatory synapses. The chain is Protein shisa-7 from Mus musculus (Mouse).